A 579-amino-acid chain; its full sequence is MKKLFLFFTLIFTAFAANSGLFDKKQTFLKVDDAFAFSATLSTDKSQLQAHWDIADGYYLYQDKISAELVGKSNPLSLHTQQAAELHQDPYFGEVKVFTHSIDGIFRGTFNNADDKVEITYQGCTEGFCYPPETKVLRIGDLAVSQEQIVEKTVEKNTALLSEQDRLADGLFHSKWAIFGFFVLGLGLAFTPCVLPMLPLLSAIVIGQQQRPNMMRAFSLAFLYVQGMALTYTLLGLAVAAIGLPFQIALQHPYVMIGLSILFVVLALSMFGLFTIQLPNSLQNKLNTWSQKQTSGAFGGAFAMGMIAGLVASPCTSAPLSGALLYVAQSGDLFTGAVTLYLLALGMGVPLMLITLFGNKILPKSGEWMNTVKQTFGFVMLALPVFLLSRILPEVWESRLWAGLATVFFIWFALQMSKNGFGYAIKIISFALAMVTVQPLQNWIWQTQTTTQSAVENMPVSQVKFKQIKNTEELDRTLAENPHSIAMLDLYADWCVACKEFEKLTFSDPQVQQQFQNILLLQVNMTKNSPENKALMERFNVMGLPTILFFDQQNNEIKGSRVTGFMDADAFSNWIEKLL.

An N-terminal signal peptide occupies residues 1-16; the sequence is MKKLFLFFTLIFTAFA. Intrachain disulfides connect Cys124–Cys129 and Cys193–Cys315. A run of 8 helical transmembrane segments spans residues 178–198, 230–250, 254–274, 296–316, 337–357, 376–396, 397–417, and 420–440; these read IFGF…LPML, LTYT…QIAL, YVMI…FGLF, GAFG…SPCT, AVTL…ITLF, FGFV…PEVW, ESRL…LQMS, and GFGY…VQPL. The 131-residue stretch at 449–579 folds into the Thioredoxin domain; that stretch reads TTTQSAVENM…AFSNWIEKLL (131 aa). The cysteines at positions 495 and 498 are disulfide-linked.

Belongs to the thioredoxin family. DsbD subfamily.

The protein resides in the cell inner membrane. The catalysed reaction is [protein]-dithiol + NAD(+) = [protein]-disulfide + NADH + H(+). It carries out the reaction [protein]-dithiol + NADP(+) = [protein]-disulfide + NADPH + H(+). Required to facilitate the formation of correct disulfide bonds in some periplasmic proteins and for the assembly of the periplasmic c-type cytochromes. Acts by transferring electrons from cytoplasmic thioredoxin to the periplasm. This transfer involves a cascade of disulfide bond formation and reduction steps. The protein is Thiol:disulfide interchange protein DsbD of Haemophilus influenzae (strain PittGG).